A 158-amino-acid chain; its full sequence is Ribosome-binding factor A (158 aa).

The disordered stretch occupies residues 114 to 158 (AKDAEVRQVSTGAQYAGDADPYRKPEDEDEETDGSSEKNEGPASA). Residues 148-158 (SSEKNEGPASA) are compositionally biased toward basic and acidic residues.

This sequence belongs to the RbfA family. Monomer. Binds 30S ribosomal subunits, but not 50S ribosomal subunits or 70S ribosomes.

Its subcellular location is the cytoplasm. Its function is as follows. One of several proteins that assist in the late maturation steps of the functional core of the 30S ribosomal subunit. Associates with free 30S ribosomal subunits (but not with 30S subunits that are part of 70S ribosomes or polysomes). Required for efficient processing of 16S rRNA. May interact with the 5'-terminal helix region of 16S rRNA. In Streptomyces griseus subsp. griseus (strain JCM 4626 / CBS 651.72 / NBRC 13350 / KCC S-0626 / ISP 5235), this protein is Ribosome-binding factor A.